Consider the following 397-residue polypeptide: Mannonate dehydratase (397 aa).

The protein belongs to the mannonate dehydratase family. Fe(2+) is required as a cofactor. Mn(2+) serves as cofactor.

It carries out the reaction D-mannonate = 2-dehydro-3-deoxy-D-gluconate + H2O. It participates in carbohydrate metabolism; pentose and glucuronate interconversion. Functionally, catalyzes the dehydration of D-mannonate. This is Mannonate dehydratase from Saccharophagus degradans (strain 2-40 / ATCC 43961 / DSM 17024).